Consider the following 150-residue polypeptide: UPF0178 protein Shewmr4_1560 (150 aa).

The protein belongs to the UPF0178 family.

This Shewanella sp. (strain MR-4) protein is UPF0178 protein Shewmr4_1560.